The following is a 141-amino-acid chain: Large ribosomal subunit protein uL13 (141 aa).

The protein belongs to the universal ribosomal protein uL13 family. In terms of assembly, part of the 50S ribosomal subunit.

This protein is one of the early assembly proteins of the 50S ribosomal subunit, although it is not seen to bind rRNA by itself. It is important during the early stages of 50S assembly. The sequence is that of Large ribosomal subunit protein uL13 from Helicobacter pylori (strain P12).